Reading from the N-terminus, the 264-residue chain is Hydroxyethylthiazole kinase (264 aa).

Methionine 40 is a binding site for substrate. The ATP site is built by lysine 116 and threonine 161. Glycine 188 serves as a coordination point for substrate.

This sequence belongs to the Thz kinase family. Mg(2+) serves as cofactor.

It catalyses the reaction 5-(2-hydroxyethyl)-4-methylthiazole + ATP = 4-methyl-5-(2-phosphooxyethyl)-thiazole + ADP + H(+). Its pathway is cofactor biosynthesis; thiamine diphosphate biosynthesis; 4-methyl-5-(2-phosphoethyl)-thiazole from 5-(2-hydroxyethyl)-4-methylthiazole: step 1/1. Functionally, catalyzes the phosphorylation of the hydroxyl group of 4-methyl-5-beta-hydroxyethylthiazole (THZ). The protein is Hydroxyethylthiazole kinase of Staphylococcus carnosus (strain TM300).